The chain runs to 3926 residues: Protein bassoon (3926 aa).

The disordered stretch occupies residues 1–161 (MGNEVSLEGG…PTSPYSVPQI (161 aa)). A lipid anchor (N-myristoyl glycine) is attached at Gly2. Pro residues-rich tracts occupy residues 15 to 30 (PLPP…PGPG) and 58 to 72 (PPVP…PGPG). The interval 23–32 (PGPGPGPGPG) is 5 X 2 AA tandem repeats of P-G. The tract at residues 61–74 (PGPGPGPGPGPGPG) is 7 X 2 AA tandem repeats of P-G. Composition is skewed to polar residues over residues 90-105 (RAAS…TTPG) and 130-157 (QVDS…SPYS). Ser145 is modified (phosphoserine). Arg148 bears the Omega-N-methylarginine mark. 2 C4-type zinc fingers span residues 170–193 (CPIC…CTQC) and 198–220 (CNQC…CLNC). Disordered stretches follow at residues 231–343 (TTAP…EQTQ) and 366–459 (SVQP…KTMP). Over residues 233-243 (APRSKSQQQLH) the composition is skewed to polar residues. 2 positions are modified to phosphoserine: Ser244 and Ser248. A compositionally biased stretch (polar residues) spans 366-377 (SVQPEADTQGQP). C4-type zinc fingers lie at residues 465–488 (CPLC…CTTC) and 493–515 (CNLC…CLNC). Disordered regions lie at residues 524 to 927 (SLGE…LQGG) and 940 to 1248 (GSYG…AEGT). Low complexity predominate over residues 552 to 569 (PLKQKGPQGLGQPSGPLP). 3 tandem repeats follow at residues 571–577 (KASPLST), 578–584 (KASPLPS), and 585–591 (KASPQAK). A 3 X 7 AA tandem repeats of K-A-S-P-[LQ]-[APS]-[KST] region spans residues 571 to 591 (KASPLSTKASPLPSKASPQAK). The segment covering 619-631 (MPKPPPETTPTPA) has biased composition (pro residues). The span at 671-680 (QDASRSPQSL) shows a compositional bias: polar residues. Residues 681-698 (SDTGYSSDGISSSQSEIT) are compositionally biased toward low complexity. Over residues 771-787 (FDSDEELEDILEEDEDS) the composition is skewed to acidic residues. Basic and acidic residues predominate over residues 788–797 (AEWRRRREQQ). Residues 851 to 862 (SAEEDNLEEDDT) show a composition bias toward acidic residues. Arg867 bears the Omega-N-methylarginine mark. At Ser970 the chain carries Phosphoserine. Positions 984-1001 (PASTPSYTSGTSPTSLSS) are enriched in low complexity. A coiled-coil region spans residues 1037–1092 (IEDSSEEEELREEEELLREQEKMREVEQQRIRSTARKTRRDKEELRAQRRRERSKT). A compositionally biased stretch (acidic residues) spans 1039–1052 (DSSEEEELREEEEL). Phosphoserine occurs at positions 1040 and 1041. Over residues 1053 to 1066 (LREQEKMREVEQQR) the composition is skewed to basic and acidic residues. Ser1090 carries the post-translational modification Phosphoserine. A Phosphothreonine modification is found at Thr1092. Residues Ser1098 and Ser1104 each carry the phosphoserine modification. Over residues 1107-1122 (EELRQAAEMEELHRSS) the composition is skewed to basic and acidic residues. Composition is skewed to low complexity over residues 1123–1133 (CSEYSPSPSLD) and 1163–1180 (SPTE…SGRP). Positions 1181 to 1208 (LKSAEEAYEEMMRKAELLQRQQGQAAGA) form a coiled coil. Residues 1182–1197 (KSAEEAYEEMMRKAEL) are compositionally biased toward basic and acidic residues. A compositionally biased stretch (low complexity) spans 1199 to 1209 (QRQQGQAAGAR). Residue Ser1226 is modified to Phosphoserine. A coiled-coil region spans residues 1276-1294 (RDLAFAEDKKKEKQFLNAE). 2 disordered regions span residues 1298 to 1547 (MDPM…RLVW) and 1570 to 1620 (RMVH…RVPS). Positions 1322–1332 (SFSTPTSSDSS) are enriched in low complexity. O-linked (GlcNAc) threonine glycosylation occurs at Thr1343. Residues 1346-1355 (FAKETQDPLK) show a composition bias toward basic and acidic residues. Low complexity-rich tracts occupy residues 1358–1367 (SSPASPSSAS) and 1377–1392 (GPGT…CPAG). Thr1384 carries O-linked (GlcNAc) threonine glycosylation. Over residues 1408-1434 (RSPSPSSTAHSYGHSPTTANYGSQTED) the composition is skewed to polar residues. A compositionally biased stretch (low complexity) spans 1466–1493 (PSRAYSYFASSSPPLSPSSPSESPTFSP). Phosphoserine occurs at positions 1477, 1486, and 1488. Residues 1570-1598 (RMVHASASTSPLCSPTETQPTTHGYSQTT) are compositionally biased toward polar residues. The span at 1606–1616 (PPEPPGPPGFP) shows a compositional bias: pro residues. Omega-N-methylarginine is present on residues Arg1787 and Arg1791. Residue Arg1801 is modified to Asymmetric dimethylarginine; alternate. Arg1801 bears the Omega-N-methylarginine; alternate mark. Arg1813 bears the Omega-N-methylarginine mark. The interval 1924-1978 (PEKSMADAAPPGQSSSPFYGPRDPEPPEPPTYRAQGVVGPGPHEEQRPYPQGLPG) is disordered. Ser1985 and Ser2041 each carry phosphoserine. Residues Arg2046 and Arg2076 each carry the omega-N-methylarginine modification. An asymmetric dimethylarginine mark is found at Arg2250, Arg2260, and Arg2266. The segment at 2287–2309 (AAKAPGAGGPSRPEMPVGAAREE) is disordered. Thr2314 is a glycosylation site (O-linked (GlcNAc) threonine). Residues 2324–2341 (GAPAPAPLAGQKPPADAA) are compositionally biased toward low complexity. Disordered stretches follow at residues 2324–2370 (GAPA…KQQE) and 2532–2568 (PSSA…ACEL). Residues 2351-2476 (RPGFEKEEAS…EEQKQRQKAP (126 aa)) are a coiled coil. Residues 2353–2370 (GFEKEEASQEERQRKQQE) show a composition bias toward basic and acidic residues. A compositionally biased stretch (polar residues) spans 2533–2543 (SSASDMSLQTE). Ser2570 carries the phosphoserine modification. 2 positions are modified to phosphothreonine: Thr2587 and Thr2614. A disordered region spans residues 2601–2655 (RRRARRSADCSVQTDDEDSAEWEQPVRRRRSRLPRHSDSGSDSKHDATASSSSAA). A compositionally biased stretch (basic and acidic residues) spans 2635-2647 (RHSDSGSDSKHDA). Thr2691 is a glycosylation site (O-linked (GlcNAc) threonine). The interval 2721-3268 (EPDGQAQGVA…PGSSGRPGKE (548 aa)) is interaction with DAO. 3 positions are modified to phosphoserine: Ser2802, Ser2851, and Ser2857. The segment at 2845–2865 (TLQRSLSDPKPLSPTAEESAK) is disordered. Thr2936 carries O-linked (GlcNAc) threonine glycosylation. A coiled-coil region spans residues 2939-2981 (SLLRELDRDLRLVEHESTKLRKKQAELDEEEKEIDAKLKYLEL). Ser3013 carries the post-translational modification Phosphoserine. Residues 3039 to 3055 (AAAPATPSGPTAFQQPR) are compositionally biased toward low complexity. Disordered regions lie at residues 3039–3375 (AAAP…FSPI), 3424–3551 (GMSS…PRAH), and 3572–3897 (EAYH…SVFS). The span at 3083-3095 (YPGPSTYPAPAFP) shows a compositional bias: pro residues. Residues 3165–3176 (ASPVVPMSSAPS) show a composition bias toward low complexity. Residues 3205 to 3228 (SVSQSPAPTYPSDSHYTSLEQNVP) show a composition bias toward polar residues. Residue Ser3291 is modified to Phosphoserine. Basic and acidic residues-rich tracts occupy residues 3321-3333 (GDSD…RVEK), 3363-3375 (QGME…FSPI), and 3465-3477 (GYER…ERLQ). Ser3373 bears the Phosphoserine mark. Arg3492 is subject to Omega-N-methylarginine. 4 stretches are compositionally biased toward basic and acidic residues: residues 3540–3551 (VQEHVKDGPRAH), 3583–3593 (WFDKPRDARSD), 3628–3647 (LWPH…EHRH), and 3657–3681 (HTGE…EARP). Over residues 3703-3712 (AEYSQPSRAS) the composition is skewed to polar residues. The span at 3741-3807 (PQAQPQLQGR…RLQQQSQPTT (67 aa)) shows a compositional bias: low complexity. Arg3808 is modified (omega-N-methylarginine). Low complexity-rich tracts occupy residues 3849 to 3860 (AKAPQQGRAPQA) and 3882 to 3892 (GAPAGQPGADG).

Interacts with PCLO, ERC2/CAST1, RIMS1 and UNC13A. Interacts with TPRG1L. Interacts with DYNLL1 and DYNLL2; these interactions potentially link PTVs to dynein and myosin V motor complexes. Interacts with ATG5; this interaction is important for the regulation of presynaptic autophagy. Interacts (via C-terminus) with TRIO (via N-terminus). Interacts with CTBP1. Interacts with SIAH1; this interaction negatively regulates SIAH1 E3 ligase activity. Interacts (via coiled region) with DAO; the interaction is direct. In terms of processing, myristoylated. The N-terminal myristoylation is not sufficient for presynaptic localization. In terms of tissue distribution, exclusively expressed in brain.

It is found in the cytoplasm. It localises to the presynaptic active zone. The protein resides in the cytoskeleton. The protein localises to the cytoplasmic vesicle. Its subcellular location is the secretory vesicle. It is found in the synaptic vesicle membrane. Functionally, scaffold protein of the presynaptic cytomatrix at the active zone (CAZ) which is the place in the synapse where neurotransmitter is released. After synthesis, participates in the formation of Golgi-derived membranous organelles termed Piccolo-Bassoon transport vesicles (PTVs) that are transported along axons to sites of nascent synaptic contacts. At the presynaptic active zone, regulates the spatial organization of synaptic vesicle cluster, the protein complexes that execute membrane fusion and compensatory endocytosis. Also functions in processes other than assembly such as the regulation of specific presynaptic protein ubiquitination by interacting with SIAH1 or the regulation of presynaptic autophagy by associating with ATG5. Also mediates synapse to nucleus communication leading to reconfiguration of gene expression by associating with the transcriptional corepressor CTBP1 and by subsequently reducing the size of its pool available for nuclear import. Inhibits the activity of the proportion of DAO enzyme that localizes to the presynaptic active zone, which may modulate synaptic transmission. The polypeptide is Protein bassoon (Homo sapiens (Human)).